Reading from the N-terminus, the 441-residue chain is tRNA(Ile)-lysidine synthase (441 aa).

ATP is bound at residue 27–32 (SGGVDS).

Belongs to the tRNA(Ile)-lysidine synthase family.

It is found in the cytoplasm. It catalyses the reaction cytidine(34) in tRNA(Ile2) + L-lysine + ATP = lysidine(34) in tRNA(Ile2) + AMP + diphosphate + H(+). Ligates lysine onto the cytidine present at position 34 of the AUA codon-specific tRNA(Ile) that contains the anticodon CAU, in an ATP-dependent manner. Cytidine is converted to lysidine, thus changing the amino acid specificity of the tRNA from methionine to isoleucine. This is tRNA(Ile)-lysidine synthase from Proteus mirabilis (strain HI4320).